Here is a 921-residue protein sequence, read N- to C-terminus: Isoleucine--tRNA ligase (921 aa).

The 'HIGH' region signature appears at 57–67 (PYANGDIHMGH). Residue glutamate 552 participates in L-isoleucyl-5'-AMP binding. The short motif at 593–597 (KMSKS) is the 'KMSKS' region element. Lysine 596 serves as a coordination point for ATP. Residues cysteine 888, cysteine 891, cysteine 908, and cysteine 911 each contribute to the Zn(2+) site.

It belongs to the class-I aminoacyl-tRNA synthetase family. IleS type 1 subfamily. In terms of assembly, monomer. It depends on Zn(2+) as a cofactor.

The protein resides in the cytoplasm. It catalyses the reaction tRNA(Ile) + L-isoleucine + ATP = L-isoleucyl-tRNA(Ile) + AMP + diphosphate. Catalyzes the attachment of isoleucine to tRNA(Ile). As IleRS can inadvertently accommodate and process structurally similar amino acids such as valine, to avoid such errors it has two additional distinct tRNA(Ile)-dependent editing activities. One activity is designated as 'pretransfer' editing and involves the hydrolysis of activated Val-AMP. The other activity is designated 'posttransfer' editing and involves deacylation of mischarged Val-tRNA(Ile). This is Isoleucine--tRNA ligase from Bacillus mycoides (strain KBAB4) (Bacillus weihenstephanensis).